A 225-amino-acid polypeptide reads, in one-letter code: UPF0700 transmembrane protein RA0705 (225 aa).

The next 6 membrane-spanning stretches (helical) occupy residues V17 to L37, G66 to I86, A95 to L115, F117 to L137, I168 to V188, and L194 to P214.

The protein belongs to the UPF0700 family.

Its subcellular location is the cell membrane. In Rhizobium meliloti (strain 1021) (Ensifer meliloti), this protein is UPF0700 transmembrane protein RA0705.